Consider the following 589-residue polypeptide: MTRTTRIDTQEATKHKDLPPVPSPLSLSSNPNPECLMESKSLGRKNFKKLSLDASPVKSTSGSLRSSDMMSIKEPTSLRQKRQRPPPILHLPTASSSATSTPTSNITGSSSASSIQFAQKSPGSGVIVSQTLSRPSSAGGIPSSGYSSLNVNQSNRNVDPDNVVSTDMILNQISNLDLTSMNHHRQHYQNSHHHLPTTNRKRQTVISSISPTKSSAASSSLEPQIQSLPASSQSPIATTSSLKLNNKDLLTLKQLGSGNSGSVSKILHIPTQKTMAKKIIHIDSKSVIQTQIIRELRILHECHSPYIIEFYGACLNNNNTIVICMEYCNCGSLDKILPLCENKQFPTFVLKKLSFAILSGLTYLYTTHKIIHRDIKPNNVLMTHKGEFKLCDFGVSRELTNSLAMADTFVGTSMYMSPERIQGLDYGVKSDVWSTGLMLIELASGVPVWSEDDNNNDDDEDDEDDAYVRQGSIAAERNGQNSPSRSRKNKQKGNGYNSYNGPEGILDLLQRIVNEDAPTLTNKINPVTKLPYDKYLCQFIDLCLIKDDSVRKTPWQLLEDKEHFFKGVEEGVYDKEHKSWAKKIRKCKV.

Positions 1 to 18 (MTRTTRIDTQEATKHKDL) are enriched in basic and acidic residues. Disordered regions lie at residues 1 to 162 (MTRT…DPDN) and 185 to 233 (RQHY…ASSQ). Residues 24–33 (PLSLSSNPNP) show a composition bias toward low complexity. The span at 57 to 69 (VKSTSGSLRSSDM) shows a compositional bias: polar residues. Low complexity predominate over residues 92–121 (PTASSSATSTPTSNITGSSSASSIQFAQKS). Polar residues-rich tracts occupy residues 127–136 (IVSQTLSRPS) and 144–162 (SGYSSLNVNQSNRNVDPDN). Residues 185 to 203 (RQHYQNSHHHLPTTNRKRQ) are compositionally biased toward basic residues. Low complexity predominate over residues 206–220 (ISSISPTKSSAASSS). A compositionally biased stretch (polar residues) spans 221–233 (LEPQIQSLPASSQ). A Protein kinase domain is found at 249-565 (LLTLKQLGSG…QLLEDKEHFF (317 aa)). ATP contacts are provided by residues 255–263 (LGSGNSGSV) and Lys278. The active-site Proton acceptor is the Asp374. Ser402 carries the post-translational modification Phosphoserine. Residue Thr408 is modified to Phosphothreonine. Positions 473–499 (IAAERNGQNSPSRSRKNKQKGNGYNSY) are disordered.

The protein belongs to the protein kinase superfamily. STE Ser/Thr protein kinase family. MAP kinase kinase subfamily.

The enzyme catalyses L-seryl-[protein] + ATP = O-phospho-L-seryl-[protein] + ADP + H(+). It carries out the reaction L-threonyl-[protein] + ATP = O-phospho-L-threonyl-[protein] + ADP + H(+). It catalyses the reaction L-tyrosyl-[protein] + ATP = O-phospho-L-tyrosyl-[protein] + ADP + H(+). The chain is Serine/threonine-protein kinase STE7 homolog (HST7) from Candida albicans (strain SC5314 / ATCC MYA-2876) (Yeast).